The following is a 62-amino-acid chain: Large ribosomal subunit protein uL30 (62 aa).

This sequence belongs to the universal ribosomal protein uL30 family. Part of the 50S ribosomal subunit.

The polypeptide is Large ribosomal subunit protein uL30 (Geobacillus kaustophilus (strain HTA426)).